The chain runs to 275 residues: Integrase homolog (275 aa).

The span at 88–111 (RVSQDRQAQGRERRSVLLPQERRG) shows a compositional bias: basic and acidic residues. The tract at residues 88–120 (RVSQDRQAQGRERRSVLLPQERRGSSGRQPLYS) is disordered.

This sequence belongs to the 'phage' integrase family.

Its function is as follows. Integrase-recombinase proteins are responsible for catalyzing strand exchange between DNA molecules and play an important role in the DNA replication. May be required for the formation of concatameric complex replicative intermediates and/or their resolution before encapsidation. The polypeptide is Integrase homolog (INT) (Dryophytes versicolor (chameleon treefrog)).